Consider the following 546-residue polypeptide: Sulfite oxidase, mitochondrial (546 aa).

A mitochondrion-targeting transit peptide spans 1–80; sequence MLLQLYRSVV…YHEHRCRASQ (80 aa). Positions 83-162 constitute a Cytochrome b5 heme-binding domain; sequence PRMYSKEDVR…LAEYKIGELN (80 aa). Position 119 (His119) interacts with heme b. At Ser124 the chain carries Phosphoserine. 3 residues coordinate heme b: His144, Gln146, and His148. The hinge stretch occupies residues 166-175; that stretch reads SMSPSVEASD. Residues 176 to 402 are moco domain; sequence PYADDPIRHP…YSHWQRRDYK (227 aa). Residues 216–220, Cys265, Asp323, His362, Arg367, and 378–380 each bind Mo-molybdopterin; these read FTRNH and HVK. The tract at residues 403–539 is homodimerization; sequence GFSPSVDWDT…RGVLSNAWHR (137 aa).

In terms of assembly, homodimer. Requires heme b as cofactor. The cofactor is Mo-molybdopterin.

The protein resides in the mitochondrion intermembrane space. It catalyses the reaction sulfite + O2 + H2O = sulfate + H2O2. The protein operates within energy metabolism; sulfur metabolism. Its function is as follows. Catalyzes the oxidation of sulfite to sulfate, the terminal reaction in the oxidative degradation of sulfur-containing amino acids. The chain is Sulfite oxidase, mitochondrial (Suox) from Mus musculus (Mouse).